The following is a 498-amino-acid chain: Lysine--tRNA ligase (498 aa).

Residues glutamate 401 and glutamate 408 each coordinate Mg(2+).

It belongs to the class-II aminoacyl-tRNA synthetase family. Homodimer. Mg(2+) is required as a cofactor.

It localises to the cytoplasm. The enzyme catalyses tRNA(Lys) + L-lysine + ATP = L-lysyl-tRNA(Lys) + AMP + diphosphate. The protein is Lysine--tRNA ligase of Dehalococcoides mccartyi (strain CBDB1).